The primary structure comprises 647 residues: Leucine-rich repeat transmembrane protein FLRT3 (647 aa).

Positions 1 to 28 (MITVPWSVFLIWTKIGLLLDMAPYSVAA) are cleaved as a signal peptide. The Extracellular portion of the chain corresponds to 29-526 (KPCPSVCRCD…KEPYKNSSVP (498 aa)). Positions 30–62 (PCPSVCRCDVGFIYCNDRDLTSIPTGIPEDATN) constitute an LRRNT domain. 2 disulfide bridges follow: Cys31/Cys37 and Cys35/Cys44. LRR repeat units follow at residues 58–82 (EDAT…LKNL), 83–105 (RRVE…LPKY), 107–126 (KELH…SLSQ), 127–152 (IPYL…AFRD), 154–179 (IYLR…TIEE), 181–197 (RLDD…SLQD), 198–223 (LTNL…VFMN), 225–246 (VNLT…NLPG), 247–269 (TNLR…AFSY), and 270–293 (LRQL…VFDD). N-linked (GlcNAc...) asparagine glycosylation is present at Asn226. Residues 305 to 356 (NPWHCGCKMKWVRDWLQSLPLKVNVRGLMCQAPEKVRGMAIKDLNAELFDCK) enclose the LRRCT domain. Cys309 and Cys334 are joined by a disulfide. Positions 404–502 (PVRKIITIFV…ECIETETAPL (99 aa)) constitute a Fibronectin type-III domain. The helical transmembrane segment at 527 to 547 (LAAIIGGAVALVALALLALVC) threads the bilayer. At 548 to 647 (WYVHRNGALF…GIPDSDHSHS (100 aa)) the chain is on the cytoplasmic side. The interval 620–647 (LYKNSHSESSSNRSYRDSGIPDSDHSHS) is disordered.

In terms of processing, N-glycosylated. Post-translationally, proteolytic cleavage in the juxtamembrane region gives rise to a soluble ectodomain. Cleavage is probably effected by a metalloprotease.

The protein resides in the cell membrane. Its subcellular location is the endoplasmic reticulum membrane. It localises to the cell junction. It is found in the focal adhesion. The protein localises to the secreted. The protein resides in the cell projection. Its subcellular location is the axon. It localises to the growth cone membrane. In terms of biological role, modulates the structure and function of the apical ectodermal ridge (AER) that controls embryonic limb development. Functions in cell-cell adhesion, cell migration and axon guidance, exerting an attractive or repulsive role depending on its interaction partners. Plays a role in the spatial organization of brain neurons. Plays a role in vascular development. Plays a role in cell-cell adhesion via its interaction with latrophilins that are expressed at the surface of adjacent cells. Mediates axon attraction towards cells expressing NTN1. Mediates axon growth cone collapse and plays a repulsive role in neuron guidance via its interaction with UNC-5 family members. Plays a role in the regulation of the density of glutamaergic synapses. Plays a role in fibroblast growth factor-mediated signaling cascades. Required for normal morphogenesis during embryonic development, but not for normal embryonic patterning. This is Leucine-rich repeat transmembrane protein FLRT3 (FLRT3) from Gallus gallus (Chicken).